Reading from the N-terminus, the 290-residue chain is Eukaryotic translation initiation factor 3 subunit F-2 (290 aa).

Residues 12-150 form the MPN domain; sequence VRLQPLVLFQ…TRLYCGVTMG (139 aa).

It belongs to the eIF-3 subunit F family. As to quaternary structure, component of the eukaryotic translation initiation factor 3 (eIF-3) complex. The eIF-3 complex interacts with pix.

It localises to the cytoplasm. Component of the eukaryotic translation initiation factor 3 (eIF-3) complex, which is involved in protein synthesis of a specialized repertoire of mRNAs and, together with other initiation factors, stimulates binding of mRNA and methionyl-tRNAi to the 40S ribosome. The eIF-3 complex specifically targets and initiates translation of a subset of mRNAs involved in cell proliferation. This Drosophila virilis (Fruit fly) protein is Eukaryotic translation initiation factor 3 subunit F-2.